A 285-amino-acid chain; its full sequence is K88 fimbrial protein AB (285 aa).

The first 21 residues, 1-21, serve as a signal peptide directing secretion; that stretch reads MKKTLIALAIAASAASGMAHA.

The protein belongs to the fimbrial K88 protein family. K88 fimbria, 0.1-1 micrometer in length and 7 nanometers in diameter, is composed of about 100 identical subunits.

The protein localises to the fimbrium. Functionally, K88 major fimbrial subunit. Fimbriae (also called pili), are polar filaments radiating from the surface of the bacterium to a length of 0.5-1.5 micrometers and numbering 100-300 per cell. They enable bacteria to colonize the epithelium of specific host organs. This chain is K88 fimbrial protein AB (faeG), found in Escherichia coli.